The primary structure comprises 439 residues: Enolase 1 (439 aa).

Residues His160 and Glu169 each contribute to the substrate site. The Proton donor role is filled by Glu212. The Mg(2+) site is built by Asp247, Glu296, and Asp323. Substrate is bound by residues Glu296 and Asp323. Lys348 (proton acceptor) is an active-site residue. Residues 375–378 (SHRS) and Lys399 contribute to the substrate site.

It belongs to the enolase family. Homodimer. Mg(2+) serves as cofactor.

The protein localises to the cytoplasm. The catalysed reaction is (2R)-2-phosphoglycerate = phosphoenolpyruvate + H2O. The protein operates within carbohydrate degradation; glycolysis; pyruvate from D-glyceraldehyde 3-phosphate: step 4/5. In Debaryomyces hansenii (strain ATCC 36239 / CBS 767 / BCRC 21394 / JCM 1990 / NBRC 0083 / IGC 2968) (Yeast), this protein is Enolase 1 (ENO1).